Consider the following 338-residue polypeptide: Anthranilate phosphoribosyltransferase (338 aa).

5-phospho-alpha-D-ribose 1-diphosphate contacts are provided by residues Gly-81, 84–85, Thr-89, 91–94, 109–117, and Ala-121; these read GD, NIST, and KHGNRNLSS. Gly-81 serves as a coordination point for anthranilate. Ser-93 is a Mg(2+) binding site. Asn-112 serves as a coordination point for anthranilate. Residue Arg-167 coordinates anthranilate. Residues Asp-226 and Glu-227 each coordinate Mg(2+).

This sequence belongs to the anthranilate phosphoribosyltransferase family. Homodimer. Mg(2+) is required as a cofactor.

The catalysed reaction is N-(5-phospho-beta-D-ribosyl)anthranilate + diphosphate = 5-phospho-alpha-D-ribose 1-diphosphate + anthranilate. It participates in amino-acid biosynthesis; L-tryptophan biosynthesis; L-tryptophan from chorismate: step 2/5. Catalyzes the transfer of the phosphoribosyl group of 5-phosphorylribose-1-pyrophosphate (PRPP) to anthranilate to yield N-(5'-phosphoribosyl)-anthranilate (PRA). The polypeptide is Anthranilate phosphoribosyltransferase (Cereibacter sphaeroides (strain ATCC 17023 / DSM 158 / JCM 6121 / CCUG 31486 / LMG 2827 / NBRC 12203 / NCIMB 8253 / ATH 2.4.1.) (Rhodobacter sphaeroides)).